A 551-amino-acid chain; its full sequence is Thermophilic beta-amylase (551 aa).

Positions methionine 1 to alanine 32 are cleaved as a signal peptide. Substrate is bound at residue aspartate 73. Glutamate 80 provides a ligand contact to Ca(2+). Substrate is bound by residues histidine 113 and aspartate 121. A Ca(2+)-binding site is contributed by glutamate 167. Glutamate 195 serves as the catalytic Proton donor. Substrate contacts are provided by lysine 310, histidine 315, and threonine 353. The active-site Proton acceptor is glutamate 392. Substrate is bound by residues asparagine 393–alanine 394 and arginine 423. One can recognise a CBM20 domain in the interval leucine 448–asparagine 551.

Belongs to the glycosyl hydrolase 14 family. Monomer. Requires Ca(2+) as cofactor.

It carries out the reaction Hydrolysis of (1-&gt;4)-alpha-D-glucosidic linkages in polysaccharides so as to remove successive maltose units from the non-reducing ends of the chains.. The protein is Thermophilic beta-amylase of Thermoanaerobacterium thermosulfurigenes (Clostridium thermosulfurogenes).